Consider the following 698-residue polypeptide: Elongation factor G 2 (698 aa).

One can recognise a tr-type G domain in the interval 8–290 (ERYRNIGIMA…AVVDYLPSPV (283 aa)). GTP contacts are provided by residues 17–24 (AHIDAGKT), 88–92 (DTPGH), and 142–145 (NKMD).

This sequence belongs to the TRAFAC class translation factor GTPase superfamily. Classic translation factor GTPase family. EF-G/EF-2 subfamily.

It localises to the cytoplasm. Its function is as follows. Catalyzes the GTP-dependent ribosomal translocation step during translation elongation. During this step, the ribosome changes from the pre-translocational (PRE) to the post-translocational (POST) state as the newly formed A-site-bound peptidyl-tRNA and P-site-bound deacylated tRNA move to the P and E sites, respectively. Catalyzes the coordinated movement of the two tRNA molecules, the mRNA and conformational changes in the ribosome. This is Elongation factor G 2 from Methylococcus capsulatus (strain ATCC 33009 / NCIMB 11132 / Bath).